Consider the following 218-residue polypeptide: Glycerol-3-phosphate acyltransferase (218 aa).

5 helical membrane-spanning segments follow: residues 4-24, 54-74, 80-100, 107-127, and 130-150; these read IALGMIIFAYLCGSISSAILI, TAAIVLICDVLKGMIPVWLAY, PFYLGITAIAACLGHIYPIFF, GVATAFGAIAAIGWDLTGLMM, and WLLTILLSGYSSLGAIVSALI.

It belongs to the PlsY family. Probably interacts with PlsX.

It localises to the cell inner membrane. The catalysed reaction is an acyl phosphate + sn-glycerol 3-phosphate = a 1-acyl-sn-glycero-3-phosphate + phosphate. It functions in the pathway lipid metabolism; phospholipid metabolism. In terms of biological role, catalyzes the transfer of an acyl group from acyl-phosphate (acyl-PO(4)) to glycerol-3-phosphate (G3P) to form lysophosphatidic acid (LPA). This enzyme utilizes acyl-phosphate as fatty acyl donor, but not acyl-CoA or acyl-ACP. The chain is Glycerol-3-phosphate acyltransferase from Photorhabdus laumondii subsp. laumondii (strain DSM 15139 / CIP 105565 / TT01) (Photorhabdus luminescens subsp. laumondii).